The following is a 248-amino-acid chain: 2,3-bisphosphoglycerate-dependent phosphoglycerate mutase (248 aa).

Substrate-binding positions include 8-15 (RHGESTWN), 21-22 (TG), Arg60, 87-90 (ERHY), Lys98, 114-115 (RR), and 183-184 (GN). His9 serves as the catalytic Tele-phosphohistidine intermediate. The active-site Proton donor/acceptor is the Glu87.

Belongs to the phosphoglycerate mutase family. BPG-dependent PGAM subfamily. Homodimer.

The enzyme catalyses (2R)-2-phosphoglycerate = (2R)-3-phosphoglycerate. It participates in carbohydrate degradation; glycolysis; pyruvate from D-glyceraldehyde 3-phosphate: step 3/5. Functionally, catalyzes the interconversion of 2-phosphoglycerate and 3-phosphoglycerate. This chain is 2,3-bisphosphoglycerate-dependent phosphoglycerate mutase, found in Paraburkholderia phytofirmans (strain DSM 17436 / LMG 22146 / PsJN) (Burkholderia phytofirmans).